The sequence spans 376 residues: MTTTLIPAQQYRDIFVAGKPLIDLRAPIEFNRGAFPSSVNLPLMVDKEREKVGTCYKQQGQQAAIALGHSLVHGAVKQQRIDAWLGFLAAQPEAYLYCFRGGLRSQLTQQWLKEAGATVPYVQGGYKGMRQYLIGVIETTPSQQPLLSLSGMTGSGKTDFLIQRKEAVDLEGIANHRGSSFGKNIDPQPTQINFENQLAIALLRHQQDNHSCLLLEDESFLIGRSALPQSFYNAMQAADILVLEEADDIRLNRLLDEYVHKMHQGFVERLGIEAGFNAFSQYLLQSLTSIRKRLGGKQYQELQDTMQQALSQQLNQNQTSQHLAWINLLLQKYYDPMYEYQLEKKAHRVLFRGNHQAMHEWLDNLSQDSLSQENLG.

The Rhodanese domain maps to 15–138; sequence FVAGKPLIDL…MRQYLIGVIE (124 aa). Cysteine 98 serves as the catalytic S-selanylcysteine intermediate.

It belongs to the SelU family. As to quaternary structure, monomer.

It carries out the reaction 5-methylaminomethyl-2-thiouridine(34) in tRNA + selenophosphate + (2E)-geranyl diphosphate + H2O + H(+) = 5-methylaminomethyl-2-selenouridine(34) in tRNA + (2E)-thiogeraniol + phosphate + diphosphate. It catalyses the reaction 5-methylaminomethyl-2-thiouridine(34) in tRNA + (2E)-geranyl diphosphate = 5-methylaminomethyl-S-(2E)-geranyl-thiouridine(34) in tRNA + diphosphate. The enzyme catalyses 5-methylaminomethyl-S-(2E)-geranyl-thiouridine(34) in tRNA + selenophosphate + H(+) = 5-methylaminomethyl-2-(Se-phospho)selenouridine(34) in tRNA + (2E)-thiogeraniol. The catalysed reaction is 5-methylaminomethyl-2-(Se-phospho)selenouridine(34) in tRNA + H2O = 5-methylaminomethyl-2-selenouridine(34) in tRNA + phosphate. Involved in the post-transcriptional modification of the uridine at the wobble position (U34) of tRNA(Lys), tRNA(Glu) and tRNA(Gln). Catalyzes the conversion of 2-thiouridine (S2U-RNA) to 2-selenouridine (Se2U-RNA). Acts in a two-step process involving geranylation of 2-thiouridine (S2U) to S-geranyl-2-thiouridine (geS2U) and subsequent selenation of the latter derivative to 2-selenouridine (Se2U) in the tRNA chain. The protein is tRNA 2-selenouridine synthase of Shewanella oneidensis (strain ATCC 700550 / JCM 31522 / CIP 106686 / LMG 19005 / NCIMB 14063 / MR-1).